A 269-amino-acid polypeptide reads, in one-letter code: 4-hydroxy-tetrahydrodipicolinate reductase (269 aa).

NAD(+) contacts are provided by residues 11–16 (GASGRM) and glutamate 37. Arginine 38 contacts NADP(+). NAD(+) contacts are provided by residues 101–103 (GTT) and 125–128 (AGNM). Histidine 158 serves as the catalytic Proton donor/acceptor. Residue histidine 159 coordinates (S)-2,3,4,5-tetrahydrodipicolinate. The active-site Proton donor is lysine 162. 168–169 (GT) serves as a coordination point for (S)-2,3,4,5-tetrahydrodipicolinate.

It belongs to the DapB family.

Its subcellular location is the cytoplasm. It carries out the reaction (S)-2,3,4,5-tetrahydrodipicolinate + NAD(+) + H2O = (2S,4S)-4-hydroxy-2,3,4,5-tetrahydrodipicolinate + NADH + H(+). It catalyses the reaction (S)-2,3,4,5-tetrahydrodipicolinate + NADP(+) + H2O = (2S,4S)-4-hydroxy-2,3,4,5-tetrahydrodipicolinate + NADPH + H(+). The protein operates within amino-acid biosynthesis; L-lysine biosynthesis via DAP pathway; (S)-tetrahydrodipicolinate from L-aspartate: step 4/4. Functionally, catalyzes the conversion of 4-hydroxy-tetrahydrodipicolinate (HTPA) to tetrahydrodipicolinate. In Cereibacter sphaeroides (strain KD131 / KCTC 12085) (Rhodobacter sphaeroides), this protein is 4-hydroxy-tetrahydrodipicolinate reductase.